The sequence spans 218 residues: Zinc finger CCHC-type and RNA-binding motif-containing protein 1 (218 aa).

The region spanning S10–D88 is the RRM domain. The CCHC-type zinc finger occupies S105–K122. Positions A119–D218 are disordered. A coiled-coil region spans residues Q132–H188. The span at E144 to A164 shows a compositional bias: acidic residues. The segment covering R178 to R201 has biased composition (basic and acidic residues).

In terms of assembly, component of the U11/U12 snRNPs that are part of the U12-type spliceosome.

The protein resides in the nucleus. This is Zinc finger CCHC-type and RNA-binding motif-containing protein 1 (zcrb1) from Xenopus laevis (African clawed frog).